We begin with the raw amino-acid sequence, 210 residues long: LexA repressor (210 aa).

A DNA-binding region (H-T-H motif) is located at residues 31-51 (RVEISKELGFRSPNAAEEHLK). Active-site for autocatalytic cleavage activity residues include serine 126 and lysine 163.

Belongs to the peptidase S24 family. Homodimer.

It catalyses the reaction Hydrolysis of Ala-|-Gly bond in repressor LexA.. Represses a number of genes involved in the response to DNA damage (SOS response), including recA and lexA. In the presence of single-stranded DNA, RecA interacts with LexA causing an autocatalytic cleavage which disrupts the DNA-binding part of LexA, leading to derepression of the SOS regulon and eventually DNA repair. This is LexA repressor from Histophilus somni (strain 129Pt) (Haemophilus somnus).